The primary structure comprises 1190 residues: Tight junction protein 2 (1190 aa).

Residue S16 is modified to Phosphoserine. A PDZ 1 domain is found at 33 to 120 (TVTLQKDSKR…VAAIVVKRPR (88 aa)). Phosphoserine occurs at positions 130, 150, 153, 163, 168, 170, 174, 200, 220, 232, 244, 266, 325, 398, 400, 406, 415, 424, 430, and 431. Residues 152 to 306 (RSGYSERSRL…PEPRGRPGPI (155 aa)) form a disordered region. The segment covering 169–291 (RSWEDSPERG…PRSRSREHPH (123 aa)) has biased composition (basic and acidic residues). One can recognise a PDZ 2 domain in the interval 307–385 (GVLLMKSRAN…KLQLVVLRDS (79 aa)). A disordered region spans residues 408-506 (IESNRSFSPE…RPSPEDEAIY (99 aa)). Residues 415–446 (SPEERRHQYSDYDYHSSSEKLKERPSSREDTP) show a composition bias toward basic and acidic residues. The residue at position 455 (T455) is a Phosphothreonine. S499 carries the post-translational modification Phosphoserine. The PDZ 3 domain occupies 509–590 (NTKMVRFKKG…GEMVTILAQS (82 aa)). Position 574 is a phosphotyrosine (Y574). An SH3 domain is found at 604–669 (GDSFFIRSHF…PNKSRAEQMA (66 aa)). Positions 678–876 (NAGDRADFWR…WFGSLKDTIQ (199 aa)) constitute a Guanylate kinase-like domain. Residues S702 and S902 each carry the phosphoserine modification. Phosphothreonine is present on T905. S913 and S920 each carry phosphoserine. 2 disordered regions span residues 920–1079 (SDFE…KSVL) and 1105–1190 (NARI…DTEL). 2 positions are modified to phosphothreonine: T925 and T933. The segment covering 956–967 (VQHEESIRKPSP) has biased composition (basic and acidic residues). S966, S978, S986, S1006, S1067, and S1068 each carry phosphoserine. Residues 994–1014 (EPPKAKTQNKEESYDFSKSYE) show a composition bias toward basic and acidic residues. The segment covering 1060-1072 (EGEEVGESSEEQD) has biased composition (acidic residues). A Phosphotyrosine modification is found at Y1118. The residue at position 1131 (T1131) is a Phosphothreonine. A phosphoserine mark is found at S1147 and S1159. The segment covering 1166–1175 (YRQQLSEHSK) has biased composition (basic and acidic residues). Residues 1188–1190 (TEL) form an interaction with SCRIB region.

Belongs to the MAGUK family. Homodimer. Interacts (via PDZ2 domain) with TJP1/ZO1 (via PDZ2 domain). Interacts with OCLN. Interacts with UBN1. Interacts with SAFB in the nucleus. Interacts with SCRIB. Interacts with USP53 (via the C-terminal region). Interacts with claudins, including CLDN1, CLDN2, CLDN3, CLDN5 and CLDN7. Interacts with CLDN18. Interacts (via N-terminus) with CTNNA1. In terms of tissue distribution, this protein is found in epithelial cell junctions. Isoform A1 is abundant in the heart and brain. Detected in brain and skeletal muscle. It is present almost exclusively in normal tissues. Isoform C1 is expressed at high level in the kidney, pancreas, heart and placenta. Not detected in brain and skeletal muscle. Found in normal as well as in most neoplastic tissues.

It is found in the cell junction. The protein localises to the adherens junction. It localises to the cell membrane. Its subcellular location is the tight junction. The protein resides in the nucleus. In terms of biological role, plays a role in tight junctions and adherens junctions. Acts as a positive regulator of RANKL-induced osteoclast differentiation, potentially via mediating downstream transcriptional activity. The polypeptide is Tight junction protein 2 (Homo sapiens (Human)).